The primary structure comprises 210 residues: FMN-dependent NADH:quinone oxidoreductase (210 aa).

Residues Ser17–Ser19 and Ser148–Gly151 contribute to the FMN site.

The protein belongs to the azoreductase type 1 family. Homodimer. The cofactor is FMN.

It catalyses the reaction 2 a quinone + NADH + H(+) = 2 a 1,4-benzosemiquinone + NAD(+). The enzyme catalyses N,N-dimethyl-1,4-phenylenediamine + anthranilate + 2 NAD(+) = 2-(4-dimethylaminophenyl)diazenylbenzoate + 2 NADH + 2 H(+). Functionally, quinone reductase that provides resistance to thiol-specific stress caused by electrophilic quinones. Its function is as follows. Also exhibits azoreductase activity. Catalyzes the reductive cleavage of the azo bond in aromatic azo compounds to the corresponding amines. The chain is FMN-dependent NADH:quinone oxidoreductase from Geotalea uraniireducens (strain Rf4) (Geobacter uraniireducens).